The primary structure comprises 513 residues: Xylose import ATP-binding protein XylG (513 aa).

ABC transporter domains follow at residues 5–242 (LEMK…VGRE) and 259–505 (LRVE…LRSE). Residue 37–44 (GENGSGKS) coordinates ATP.

Belongs to the ABC transporter superfamily. Xylose importer (TC 3.A.1.2.4) family. The complex is composed of two ATP-binding proteins (XylG), two transmembrane proteins (XylH) and a solute-binding protein (XylF).

It localises to the cell inner membrane. The catalysed reaction is D-xylose(out) + ATP + H2O = D-xylose(in) + ADP + phosphate + H(+). Functionally, part of the ABC transporter complex XylFGH involved in xylose import. Responsible for energy coupling to the transport system. This Pectobacterium atrosepticum (strain SCRI 1043 / ATCC BAA-672) (Erwinia carotovora subsp. atroseptica) protein is Xylose import ATP-binding protein XylG.